The following is a 211-amino-acid chain: Large ribosomal subunit protein uL3 (211 aa).

The residue at position 150 (Gln150) is an N5-methylglutamine.

Belongs to the universal ribosomal protein uL3 family. Part of the 50S ribosomal subunit. Forms a cluster with proteins L14 and L19. Methylated by PrmB.

Its function is as follows. One of the primary rRNA binding proteins, it binds directly near the 3'-end of the 23S rRNA, where it nucleates assembly of the 50S subunit. This chain is Large ribosomal subunit protein uL3, found in Pseudomonas fluorescens (strain Pf0-1).